The sequence spans 394 residues: Flagellin A (394 aa).

Belongs to the bacterial flagellin family.

The protein localises to the secreted. It is found in the bacterial flagellum. Functionally, flagellin is the subunit protein which polymerizes to form the filaments of bacterial flagella. Homomer of FlaA is able to form a functional filament. The sequence is that of Flagellin A (flaA) from Rhizobium meliloti (strain 1021) (Ensifer meliloti).